The following is a 227-amino-acid chain: Isopentenyl-diphosphate delta-isomerase 2 (227 aa).

Position 36 (Lys-36) interacts with substrate. Mg(2+) is bound by residues His-40 and His-51. The 151-residue stretch at 49-199 (LLHRAFSVVL…EVKVTPWLRT (151 aa)) folds into the Nudix hydrolase domain. Residues Arg-70 and Lys-74 each coordinate substrate. Residue Ser-86 is part of the active site. Residue Ser-87 coordinates substrate. Residues Glu-146 and Glu-148 each coordinate Mg(2+). Glu-148 is an active-site residue. The short motif at 225–227 (HRV) is the Microbody targeting signal element.

Belongs to the IPP isomerase type 1 family. Mg(2+) is required as a cofactor. As to expression, muscle-specific expression.

Its subcellular location is the peroxisome. It carries out the reaction isopentenyl diphosphate = dimethylallyl diphosphate. The protein operates within isoprenoid biosynthesis; dimethylallyl diphosphate biosynthesis; dimethylallyl diphosphate from isopentenyl diphosphate: step 1/1. Catalyzes the 1,3-allylic rearrangement of the homoallylic substrate isopentenyl (IPP) to its highly electrophilic allylic isomer, dimethylallyl diphosphate (DMAPP). The polypeptide is Isopentenyl-diphosphate delta-isomerase 2 (IDI2) (Homo sapiens (Human)).